The chain runs to 248 residues: 5'-nucleotidase SurE (248 aa).

Aspartate 8, aspartate 9, serine 39, and asparagine 91 together coordinate a divalent metal cation.

It belongs to the SurE nucleotidase family. It depends on a divalent metal cation as a cofactor.

It localises to the cytoplasm. The catalysed reaction is a ribonucleoside 5'-phosphate + H2O = a ribonucleoside + phosphate. In terms of biological role, nucleotidase that shows phosphatase activity on nucleoside 5'-monophosphates. The sequence is that of 5'-nucleotidase SurE from Neisseria meningitidis serogroup A / serotype 4A (strain DSM 15465 / Z2491).